The chain runs to 346 residues: Putative serine/threonine-protein kinase K06H7.1 (346 aa).

Residues 20 to 287 form the Protein kinase domain; the sequence is YKVVQKLGEG…KLFKLLEDVM (268 aa). ATP-binding positions include 26–34 and Lys50; that span reads LGEGGCGSV. Catalysis depends on Asp141, which acts as the Proton acceptor. A disordered region spans residues 302–326; that stretch reads PEKKKNPASQGNKFGLGKKGTKESG.

This sequence belongs to the protein kinase superfamily. Ser/Thr protein kinase family.

The enzyme catalyses L-seryl-[protein] + ATP = O-phospho-L-seryl-[protein] + ADP + H(+). It carries out the reaction L-threonyl-[protein] + ATP = O-phospho-L-threonyl-[protein] + ADP + H(+). The sequence is that of Putative serine/threonine-protein kinase K06H7.1 from Caenorhabditis elegans.